The following is a 111-amino-acid chain: Large ribosomal subunit protein uL22 (111 aa).

This sequence belongs to the universal ribosomal protein uL22 family. In terms of assembly, part of the 50S ribosomal subunit.

Its function is as follows. This protein binds specifically to 23S rRNA; its binding is stimulated by other ribosomal proteins, e.g. L4, L17, and L20. It is important during the early stages of 50S assembly. It makes multiple contacts with different domains of the 23S rRNA in the assembled 50S subunit and ribosome. In terms of biological role, the globular domain of the protein is located near the polypeptide exit tunnel on the outside of the subunit, while an extended beta-hairpin is found that lines the wall of the exit tunnel in the center of the 70S ribosome. The protein is Large ribosomal subunit protein uL22 of Legionella pneumophila (strain Lens).